The primary structure comprises 448 residues: Tryptophan dimethylallyltransferase 1 (448 aa).

L-tryptophan is bound by residues 80 to 81 (IL) and Glu-89. Substrate-binding residues include Arg-100, Lys-186, and Tyr-188. 2 residues coordinate L-tryptophan: Tyr-190 and Arg-251. Residues Arg-264, Lys-266, Tyr-268, Gln-350, Tyr-352, Tyr-416, and Tyr-420 each coordinate substrate.

The protein belongs to the tryptophan dimethylallyltransferase family. Homodimer.

The enzyme catalyses L-tryptophan + dimethylallyl diphosphate = 4-(3-methylbut-2-enyl)-L-tryptophan + diphosphate. The protein operates within alkaloid biosynthesis; ergot alkaloid biosynthesis. In terms of biological role, catalyzes the first step of ergot alkaloid biosynthesis. Ergot alkaloids, which are produced by endophyte fungi, can enhance plant host fitness, but also cause livestock toxicosis to host plants. The protein is Tryptophan dimethylallyltransferase 1 (dmaW1) of Epichloe coenophiala (Tall fescue endophyte fungus).